A 381-amino-acid chain; its full sequence is Terpene cyclase ATR13 (381 aa).

It belongs to the terpene synthase family.

It participates in mycotoxin biosynthesis. Its function is as follows. Terpene cyclase; part of the core atranone cluster (CAC) which products are predicted to catalyze most or all steps of mycotoxin atranone synthesis, starting from geranylgeranyl pyrophosphate (GGPP). The initial cyclization of GGPP to dolabellane is probably performed by the terpene cyclase ATR13. The Baeyer-Villiger oxidation near the end of the atranone synthesis, which converts atranones D and E to atranones F and G is predicted to be catalyzed by the monooxygenase ATR8. Of the CAC's other predicted gene products, the reducing PKS ATR6 might synthesize a polyketide chain. This polyketide is probably transferred onto the atranone backbone by the polyketide transferase ATR5. Other predicted CAC products include 4 oxygenases (ATR2, ATR3, ATR4, and ATR14), 3 short-chain reductases (ATR7, ATR9, and ATR10), and a methyltransferase (ATR12). These may all be involved in the various steps of atranone biosynthesis, although their specific roles must await experimental determination. The chain is Terpene cyclase ATR13 from Stachybotrys chlorohalonatus (strain IBT 40285).